We begin with the raw amino-acid sequence, 219 residues long: Carbonic anhydrase 1 (219 aa).

C39, D41, H98, and C101 together coordinate Zn(2+).

It belongs to the beta-class carbonic anhydrase family. In terms of assembly, oligomer. Zn(2+) is required as a cofactor.

It catalyses the reaction hydrogencarbonate + H(+) = CO2 + H2O. Reversible hydration of carbon dioxide. Carbon dioxide formed in the bicarbonate-dependent decomposition of cyanate by cyanase (CynS) diffuses out of the cell faster than it would be hydrated to bicarbonate, so the apparent function of this enzyme is to catalyze the hydration of carbon dioxide and thus prevent depletion of cellular bicarbonate. The chain is Carbonic anhydrase 1 (cynT) from Escherichia coli O157:H7.